A 213-amino-acid chain; its full sequence is Small ribosomal subunit protein uS5 (213 aa).

The disordered stretch occupies residues 1 to 41 (MSGRERNGGRSAENNDKKERNERNGRNDRGGRNDRRNQQDE). One can recognise an S5 DRBM domain in the interval 45–108 (FIERVVTINR…EEARKNFFRV (64 aa)).

Belongs to the universal ribosomal protein uS5 family. As to quaternary structure, part of the 30S ribosomal subunit. Contacts proteins S4 and S8.

In terms of biological role, with S4 and S12 plays an important role in translational accuracy. Functionally, located at the back of the 30S subunit body where it stabilizes the conformation of the head with respect to the body. The chain is Small ribosomal subunit protein uS5 from Corynebacterium jeikeium (strain K411).